The chain runs to 156 residues: Deoxyuridine 5'-triphosphate nucleotidohydrolase (156 aa).

Substrate-binding positions include 76–78 (RSG), N89, 93–95 (TVD), and K103.

This sequence belongs to the dUTPase family. It depends on Mg(2+) as a cofactor.

It catalyses the reaction dUTP + H2O = dUMP + diphosphate + H(+). The protein operates within pyrimidine metabolism; dUMP biosynthesis; dUMP from dCTP (dUTP route): step 2/2. Functionally, this enzyme is involved in nucleotide metabolism: it produces dUMP, the immediate precursor of thymidine nucleotides and it decreases the intracellular concentration of dUTP so that uracil cannot be incorporated into DNA. This chain is Deoxyuridine 5'-triphosphate nucleotidohydrolase, found in Rhizobium rhizogenes (strain K84 / ATCC BAA-868) (Agrobacterium radiobacter).